Consider the following 459-residue polypeptide: Jacalin-related lectin 12 (459 aa).

3 Jacalin-type lectin domains span residues 2-148, 151-296, and 298-443; these read SQDS…YFTP, PTRM…YITT, and TLTK…YSFP.

This sequence belongs to the jacalin lectin family.

This is Jacalin-related lectin 12 (JAL12) from Arabidopsis thaliana (Mouse-ear cress).